The primary structure comprises 133 residues: Interferon-induced transmembrane protein 3 (133 aa).

The Cytoplasmic segment spans residues 1 to 57; the sequence is MNHTVQTFFSPVNSGQPPNYEMLKEEHEVAVLGAPHNPAPPTSTVIHIRSETSVPDH. Tyr-20 bears the Phosphotyrosine mark. Lys-24 is covalently cross-linked (Glycyl lysine isopeptide (Lys-Gly) (interchain with G-Cter in ubiquitin)). Residues 58–78 constitute an intramembrane region (helical); that stretch reads VVWSLFNTLFMNPCCLGFIAF. The interval 60–93 is interaction with SPP1; it reads WSLFNTLFMNPCCLGFIAFAYSVKSRDRKMVGDV. S-palmitoyl cysteine attachment occurs at residues Cys-71 and Cys-72. The Cytoplasmic portion of the chain corresponds to 79–107; sequence AYSVKSRDRKMVGDVTGAQAYASTAKCLN. Residues Lys-83, Lys-88, and Lys-104 each participate in a glycyl lysine isopeptide (Lys-Gly) (interchain with G-Cter in ubiquitin) cross-link. Residue Cys-105 is the site of S-palmitoyl cysteine attachment. The chain crosses the membrane as a helical span at residues 108–128; that stretch reads IWALILGILMTILLIVIPVLI. Residues 108-133 are interaction with VAPA; that stretch reads IWALILGILMTILLIVIPVLIFQAYG. Residues 129-133 lie on the Extracellular side of the membrane; sequence FQAYG.

It belongs to the CD225/Dispanin family. As to quaternary structure, interacts with ATP6V0B. Interacts with CD81. Interacts with SPP1; the interaction reduces OPN expression. Interacts with VAPA. Interacts with BRI3 (isoforms 1 and 2); the interaction with isoform 2 is weaker than with isoform 1. Post-translationally, palmitoylation on membrane-proximal cysteines controls clustering in membrane compartments and antiviral activity against influenza virus and hepatitis C virus (HCV). Has no effect on anti-SARS-CoV-2 activity. Not glycosylated. In terms of processing, polyubiquitinated with both 'Lys-48' and 'Lys-63' linkages. Ubiquitination negatively regulates antiviral activity. Lys-24 is the most prevalent ubiquitination site. Post-translationally, phosphorylation at Tyr-20 is required for endosomal and lysosomal location.

Its subcellular location is the cell membrane. It localises to the late endosome membrane. The protein resides in the early endosome membrane. The protein localises to the lysosome membrane. It is found in the cytoplasm. Its subcellular location is the perinuclear region. Functionally, IFN-induced antiviral protein which disrupts intracellular cholesterol homeostasis. Inhibits the entry of viruses to the host cell cytoplasm by preventing viral fusion with cholesterol depleted endosomes. May inactivate new enveloped viruses which buds out of the infected cell, by letting them go out with a cholesterol depleted membrane. Active against multiple viruses, including influenza A virus, SARS coronaviruses (SARS-CoV and SARS-CoV-2), Marburg virus (MARV), Ebola virus (EBOV), Dengue virus (DNV), West Nile virus (WNV), human immunodeficiency virus type 1 (HIV-1), hepatitis C virus (HCV) and vesicular stomatitis virus (VSV). Can inhibit: influenza virus hemagglutinin protein-mediated viral entry, MARV and EBOV GP1,2-mediated viral entry, SARS-CoV and SARS-CoV-2 S protein-mediated viral entry and VSV G protein-mediated viral entry. Plays a critical role in the structural stability and function of vacuolar ATPase (v-ATPase). Establishes physical contact with the v-ATPase of endosomes which is critical for proper clathrin localization and is also required for the function of the v-ATPase to lower the pH in phagocytic endosomes thus establishing an antiviral state. In hepatocytes, IFITM proteins act in a coordinated manner to restrict HCV infection by targeting the endocytosed HCV virion for lysosomal degradation. IFITM2 and IFITM3 display anti-HCV activity that may complement the anti-HCV activity of IFITM1 by inhibiting the late stages of HCV entry, possibly in a coordinated manner by trapping the virion in the endosomal pathway and targeting it for degradation at the lysosome. Exerts opposing activities on SARS-CoV-2, including amphipathicity-dependent restriction of virus at endosomes and amphipathicity-independent enhancement of infection at the plasma membrane. This chain is Interferon-induced transmembrane protein 3, found in Homo sapiens (Human).